Reading from the N-terminus, the 1465-residue chain is Vacuolar heme ABC transmembrane exporter abc3 (1465 aa).

The Extracellular segment spans residues 1 to 8; that stretch reads MITANKGL. The chain crosses the membrane as a helical span at residues 9–29; that stretch reads SLVLLIPNLFALVSGGLQYVF. Over 30–42 the chain is Cytoplasmic; it reads DVRRRIFRPHFSQ. The chain crosses the membrane as a helical span at residues 43–63; that stretch reads FWTIWMKFFSIALVIITQIYV. Topologically, residues 64 to 69 are extracellular; the sequence is GYKTKN. The chain crosses the membrane as a helical span at residues 70-90; that stretch reads IGWNFFSVVTYCFVLFLQFAE. Residues 91 to 97 lie on the Cytoplasmic side of the membrane; that stretch reads QSTLRVP. A helical membrane pass occupies residues 98-118; sequence MASLLIFWLLKVVTSLLILLF. Over 119–129 the chain is Extracellular; it reads SPYIAITSMAR. The helical transmembrane segment at 130-150 threads the bilayer; it reads LLTLITLFCSLVCFISEVYVP. Residue 151 to 152 participates in heme binding; it reads PC. Residues 151 to 235 are Cytoplasmic-facing; sequence PCNRVWYSDD…IYHSKNKRRS (85 aa). The helical transmembrane segment at 236–256 threads the bilayer; sequence LFLWKLLFFNHWKLVALITIT. The ABC transmembrane type-1 1 domain occupies 250 to 539; the sequence is VALITITKLI…LPTVISSLLE (290 aa). Over 257–291 the chain is Extracellular; the sequence is KLIQDVLAFVQPTLIQKTILFISSYTSPNPESPSR. The chain crosses the membrane as a helical span at residues 292–312; that stretch reads GFIIAILVLVANFLQTLLLQQ. Topologically, residues 313-362 are cytoplasmic; sequence YNQLIMLLGMRWKTELLASIYRKSLLLSSSARQNRSIGDIINYMAVDTQK. Residues 363-383 form a helical membrane-spanning segment; sequence ISDLPIYLFIIVSGPFQIALA. Residues 384–394 are Extracellular-facing; the sequence is LSNLYHLMGYS. A helical membrane pass occupies residues 395–415; the sequence is AFTGVAASVILFPCNIIVANV. Topologically, residues 416-480 are cytoplasmic; the sequence is YKKFQSILMK…KIGFITAIGD (65 aa). Residues 481 to 501 traverse the membrane as a helical segment; that stretch reads FAWIFTTIIVTTVAFGAFIIF. Residues 502-511 are Extracellular-facing; sequence HGKTQALTAD. Residues 512–532 traverse the membrane as a helical segment; it reads IVFPAVSLFNLLQFPLAMLPT. Residues 533 to 899 lie on the Cytoplasmic side of the membrane; the sequence is VISSLLEASV…VYWMYFKSCS (367 aa). The 230-residue stretch at 575–804 folds into the ABC transporter 1 domain; sequence LEIKSGTFSW…TNSELKQQLS (230 aa). 614-621 lines the ATP pocket; the sequence is GKVGAGKS. Disordered stretches follow at residues 805-824 and 840-869; these read EFND…SYPS and TYSS…TEDD. Residues 900-920 traverse the membrane as a helical segment; it reads IGLILLYFFFIISGIMMNVAT. The 287-residue stretch at 903-1189 folds into the ABC transmembrane type-1 2 domain; the sequence is ILLYFFFIIS…IVQQSVDAEN (287 aa). At 921 to 939 the chain is on the extracellular side; that stretch reads NVWLKHWSEENGKSSSELN. A helical transmembrane segment spans residues 940-960; that stretch reads PSPYFYLGIYLFFGFLSCAFI. Topologically, residues 961 to 1033 are cytoplasmic; the sequence is SSSSLTMTVL…FFFRNSIQVL (73 aa). The chain crosses the membrane as a helical span at residues 1034–1054; sequence FILGVICYSAPLSLLLIVPLF. Topologically, residues 1055–1465 are extracellular; it reads FLYLYNRAYY…YSLAKESGLI (411 aa). An ABC transporter 2 domain is found at 1226-1460; that stretch reads VSFNHYSAKY…KDSMFYSLAK (235 aa). 1260 to 1267 serves as a coordination point for ATP; sequence GRTGAGKS.

It belongs to the ABC transporter superfamily.

The protein resides in the vacuole membrane. Its function is as follows. Iron-regulated vacuolar transporter that mobilizes stored heme from the vacuole to the cytosol in response to iron deficiency. This Schizosaccharomyces pombe (strain 972 / ATCC 24843) (Fission yeast) protein is Vacuolar heme ABC transmembrane exporter abc3.